We begin with the raw amino-acid sequence, 514 residues long: Probable lipid II flippase MurJ (514 aa).

Transmembrane regions (helical) follow at residues 3–23 (ILKS…FGFF), 25–45 (DVLI…FIAF), 92–112 (ILVL…IIFI), 130–150 (LLKI…CSSI), 157–177 (FFIP…FSFF), 186–206 (IISL…YQFP), 245–265 (ISLI…ISWI), 271–291 (LIEF…FTSF), 315–335 (LILS…LVII), 354–374 (LELY…VSAF), 386–406 (ISIL…FYFQ), 409–429 (GLAL…YWKL), 448–468 (LLIA…FIPS), and 481–501 (LFTI…FLGI).

It belongs to the MurJ/MviN family.

It is found in the cell inner membrane. The protein operates within cell wall biogenesis; peptidoglycan biosynthesis. Functionally, involved in peptidoglycan biosynthesis. Transports lipid-linked peptidoglycan precursors from the inner to the outer leaflet of the cytoplasmic membrane. This Buchnera aphidicola subsp. Schizaphis graminum (strain Sg) protein is Probable lipid II flippase MurJ.